A 312-amino-acid polypeptide reads, in one-letter code: tRNA-cytidine(32) 2-sulfurtransferase (312 aa).

Positions S47–S52 match the PP-loop motif motif. [4Fe-4S] cluster is bound by residues C122, C125, and C213.

The protein belongs to the TtcA family. As to quaternary structure, homodimer. Requires Mg(2+) as cofactor. It depends on [4Fe-4S] cluster as a cofactor.

The protein localises to the cytoplasm. The enzyme catalyses cytidine(32) in tRNA + S-sulfanyl-L-cysteinyl-[cysteine desulfurase] + AH2 + ATP = 2-thiocytidine(32) in tRNA + L-cysteinyl-[cysteine desulfurase] + A + AMP + diphosphate + H(+). It participates in tRNA modification. In terms of biological role, catalyzes the ATP-dependent 2-thiolation of cytidine in position 32 of tRNA, to form 2-thiocytidine (s(2)C32). The sulfur atoms are provided by the cysteine/cysteine desulfurase (IscS) system. The protein is tRNA-cytidine(32) 2-sulfurtransferase of Actinobacillus succinogenes (strain ATCC 55618 / DSM 22257 / CCUG 43843 / 130Z).